A 215-amino-acid chain; its full sequence is Cytochrome b6 (215 aa).

The chain crosses the membrane as a helical span at residues 32–52 (IFYCLGGITLTCFIVQVATGF). C35 serves as a coordination point for heme c. The heme b site is built by H86 and H100. Transmembrane regions (helical) follow at residues 90–110 (ASMMVLMMILHVFRVYLTGGF), 116–136 (LTWITGVVLAVLTVSFGVTGY), and 186–206 (LHTFVLPLLTAVFMLMHFLMI). Residues H187 and H202 each contribute to the heme b site.

The protein belongs to the cytochrome b family. PetB subfamily. The 4 large subunits of the cytochrome b6-f complex are cytochrome b6, subunit IV (17 kDa polypeptide, PetD), cytochrome f and the Rieske protein, while the 4 small subunits are PetG, PetL, PetM and PetN. The complex functions as a dimer. It depends on heme b as a cofactor. Requires heme c as cofactor.

The protein resides in the plastid. It is found in the chloroplast thylakoid membrane. In terms of biological role, component of the cytochrome b6-f complex, which mediates electron transfer between photosystem II (PSII) and photosystem I (PSI), cyclic electron flow around PSI, and state transitions. The polypeptide is Cytochrome b6 (Chara vulgaris (Common stonewort)).